A 126-amino-acid chain; its full sequence is NADP-reducing hydrogenase subunit HndB (126 aa).

Heterotetramer composed of HndA, HndB, HndC and HndD subunits. HndA and HndB could form a heterodimeric intermediate in the electron transfer between the active site of hydrogenase subunit HndD and the NADP reduction site of the reducing subunit HndC.

It carries out the reaction H2 + NADP(+) = NADPH + H(+). Its activity is regulated as follows. Inhibited by oxygen. Catalyzes the reduction of NADP in the presence of molecular H2 to yield NADPH. In Solidesulfovibrio fructosivorans (Desulfovibrio fructosivorans), this protein is NADP-reducing hydrogenase subunit HndB (hndB).